A 553-amino-acid polypeptide reads, in one-letter code: HTH-type transcriptional regulator SgrR (553 aa).

Residues 1–113 (MSTSRLQQQF…RQMLLSQLGR (113 aa)) form the HTH marR-type domain. Positions 26-49 (LQALAEVLNCSRRHVRSLLGKMQH) form a DNA-binding region, H-T-H motif. Residues 163 to 494 (ELEPDLSHHW…EELHQDIESW (332 aa)) form a solute-binding region.

Functionally, activates the small RNA gene sgrS under glucose-phosphate stress conditions as well as yfdZ. Represses its own transcription under both stress and non-stress conditions. Might act as a sensor of the intracellular accumulation of phosphoglucose by binding these molecules in its C-terminal solute-binding domain. This Yersinia pseudotuberculosis serotype I (strain IP32953) protein is HTH-type transcriptional regulator SgrR.